The following is a 391-amino-acid chain: uncharacterized protein (391 aa).

One can recognise an HTH arsR-type domain in the interval 235–330 (VFILSRINLL…LYLKNETQKS (96 aa)).

This is an uncharacterized protein from Methanocaldococcus jannaschii (strain ATCC 43067 / DSM 2661 / JAL-1 / JCM 10045 / NBRC 100440) (Methanococcus jannaschii).